Reading from the N-terminus, the 79-residue chain is Small ribosomal subunit protein bS18B (79 aa).

This sequence belongs to the bacterial ribosomal protein bS18 family. In terms of assembly, part of the 30S ribosomal subunit. Forms a tight heterodimer with protein bS6.

Functionally, binds as a heterodimer with protein bS6 to the central domain of the 16S rRNA, where it helps stabilize the platform of the 30S subunit. The polypeptide is Small ribosomal subunit protein bS18B (Saccharopolyspora erythraea (strain ATCC 11635 / DSM 40517 / JCM 4748 / NBRC 13426 / NCIMB 8594 / NRRL 2338)).